Here is a 605-residue protein sequence, read N- to C-terminus: Adaptin medium chain homolog APM2 (605 aa).

The segment at 150–196 is disordered; the sequence is EEWSPGEESSSSSGSDSDSEYSNTNKRKDKKKKRKKKKGTKGKSVGK. Positions 155 to 171 are enriched in low complexity; it reads GEESSSSSGSDSDSEYS. A compositionally biased stretch (basic residues) spans 174-196; it reads NKRKDKKKKRKKKKGTKGKSVGK. In terms of domain architecture, MHD spans 269 to 604; that stretch reads KNEFFLDVIE…TVSDEEYAYI (336 aa).

This sequence belongs to the adaptor complexes medium subunit family. As to quaternary structure, component of the AP-1R complex composed of at least APM2, APL4 and APS1. Interacts with MIL1. Interacts with APL2.

The protein localises to the golgi apparatus membrane. Its subcellular location is the early endosome membrane. The protein resides in the cytoplasmic vesicle. It is found in the clathrin-coated vesicle membrane. Functionally, component of the AP-1-related (AP-1R) complex, an adapter protein complex that mediates of cargo protein sorting in clathrin-coated vesicles. AP-1R has a specific role in SNARE SNC1 sorting. In contrast to the APM1-containing AP-1 complex, AP-1R is incapable of sorting CHS3. The protein is Adaptin medium chain homolog APM2 (APM2) of Saccharomyces cerevisiae (strain ATCC 204508 / S288c) (Baker's yeast).